The following is a 1279-amino-acid chain: Mediator of DNA damage checkpoint protein 1 (1279 aa).

Residues 1–22 form a disordered region; sequence MENTQVIDWDAEEEEETEISSG. The tract at residues 1-150 is interaction with CHEK2; the sequence is MENTQVIDWD…PRSLLTIEKT (150 aa). Positions 2–222 are interaction with the MRN complex; it reads ENTQVIDWDA…SSPFGLGSDT (221 aa). Residue Thr4 is modified to Phosphothreonine. Residues 9–18 show a composition bias toward acidic residues; sequence WDAEEEEETE. Positions 54-105 constitute an FHA domain; it reads NVVGRSPDCSVALPFPSISKQHAVIEISAWNKAPILQDCGSLNGTQIVKPPR. Phosphothreonine is present on Thr146. Disordered stretches follow at residues 156-394, 409-634, and 714-744; these read RSQN…EEVS, LWSG…KHAK, and ETSE…PVPT. Ser168 and Ser176 each carry phosphoserine. The span at 179–192 shows a compositional bias: polar residues; it reads SVANGSRNTASPSA. Phosphoserine is present on residues Ser198 and Ser220. Thr222 bears the Phosphothreonine mark. Residues 264–277 are compositionally biased toward basic and acidic residues; the sequence is TKDKFKDTKMKEEA. Over residues 278–292 the composition is skewed to low complexity; the sequence is GSAGVPVGSVVEGSP. Position 298 is a phosphoserine (Ser298). Thr300 carries the post-translational modification Phosphothreonine. Ser314 carries the phosphoserine modification. Phosphothreonine is present on Thr316. Phosphoserine occurs at positions 350 and 354. Position 356 is a phosphothreonine (Thr356). 2 positions are modified to phosphoserine: Ser372 and Ser380. The segment covering 381–393 has biased composition (acidic residues); that stretch reads DTDEEERGEEEEV. Thr382 bears the Phosphothreonine mark. Residues Ser394, Ser411, Ser421, Ser434, and Ser438 each carry the phosphoserine modification. Polar residues predominate over residues 421 to 435; that stretch reads SQPQVLVERSQSASG. Thr440 bears the Phosphothreonine mark. Ser457 is modified (phosphoserine). Thr466 carries the post-translational modification Phosphothreonine. Phosphoserine occurs at positions 488, 489, 550, 587, and 589. Residues 545-561 are compositionally biased toward polar residues; that stretch reads QEGSSSPVADIRMSQQP. Over residues 620–634 the composition is skewed to basic and acidic residues; the sequence is GREREAHVGGTKHAK. A phosphoserine mark is found at Ser730 and Ser745. N6-acetyllysine is present on Lys764. The interval 772-1086 is disordered; the sequence is QMMPDGKASG…TKPNQEAAAP (315 aa). Ser793, Ser801, and Ser824 each carry phosphoserine. Residues 798 to 817 are compositionally biased toward low complexity; it reads ASASPQSLLTSQSQKQSTPQ. 3 stretches are compositionally biased toward polar residues: residues 862 to 889, 901 to 929, and 942 to 956; these read TCPT…STRT, QPST…TSVN, and PLTS…NLNP. Phosphothreonine is present on Thr889. Residue Thr951 is modified to Phosphothreonine. Residue Lys991 forms a Glycyl lysine isopeptide (Lys-Gly) (interchain with G-Cter in SUMO2) linkage. Residues 994–1014 show a composition bias toward low complexity; it reads STPAEPEPQSSASQSSGASEA. Phosphoserine is present on residues Ser1008, Ser1009, Ser1012, and Ser1016. The span at 1032–1047 shows a compositional bias: basic and acidic residues; it reads VVKEEDPGEIQVKEEP. Lys1034 is covalently cross-linked (Glycyl lysine isopeptide (Lys-Gly) (interchain with G-Cter in SUMO1); alternate). Lys1034 is covalently cross-linked (Glycyl lysine isopeptide (Lys-Gly) (interchain with G-Cter in SUMO2); alternate). Thr1054 carries the phosphothreonine modification. 2 BRCT domains span residues 1085 to 1163 and 1184 to 1275; these read APKV…DYLV and RERR…FVLS.

As to quaternary structure, homodimer. Interacts with H2AX, which requires phosphorylation of H2AX on 'Ser-139'. Interacts with the MRN complex, composed of MRE11, RAD50, and NBN. Interacts with CHEK2, which requires ATM-mediated phosphorylation of 'Thr-68' within the FHA domain of CHEK2. Interacts constitutively with the BRCA1-BARD1 complex, SMC1A and TP53BP1. Interacts with ATM and FANCD2, and these interactions are reduced upon DNA damage. Also interacts with the PRKDC complex, composed of XRCC6/KU70, XRCC5/KU80 and PRKDC/XRCC7. This interaction may be required for PRKDC autophosphorylation, which is essential for DNA double strand break (DSB) repair. When phosphorylated by ATM, interacts with RNF8 (via FHA domain). Interacts with CEP164. When phosphorylated, interacts with APTX (via FHA-like domain). Interacts (when phosphorylated) with TOPBP1; promoting TOPBP1 localization to DNA damage sites during mitosis. Interacts (when phosphorylated) with NBN; promoting NBN and MRN complex localization to DNA damage sites. Phosphorylated upon exposure to ionizing radiation (IR), ultraviolet radiation (UV), and hydroxyurea (HU). Phosphorylation in response to IR requires ATM, NBN, and possibly CHEK2. Also phosphorylated during the G2/M phase of the cell cycle and during activation of the mitotic spindle checkpoint. Phosphorylation at Thr-4 by ATM stabilizes and enhances homodimerization via the FHA domain. Phosphorylated at Ser-168 and Ser-198 by CK2 in response to DNA damage during mitosis, promoting interaction with TOPBP1. Phosphorylated by CK2 in response to DNA damage, promoting interaction with NBN and recruitment of the MRN complex to DNA damage sites. In terms of processing, sumoylation at Lys-1034 by PIAS4 following DNA damage promotes ubiquitin-mediated degradation. Post-translationally, ubiquitinated by RNF4, leading to proteasomal degradation; undergoes 'Lys-48'-linked polyubiquitination.

Its subcellular location is the nucleus. The protein localises to the chromosome. Functionally, histone reader protein required for checkpoint-mediated cell cycle arrest in response to DNA damage within both the S phase and G2/M phases of the cell cycle. Specifically recognizes and binds histone H2AX phosphorylated at 'Ser-139', a marker of DNA damage, serving as a scaffold for the recruitment of DNA repair and signal transduction proteins to discrete foci of DNA damage sites. Also required for downstream events subsequent to the recruitment of these proteins. These include phosphorylation and activation of the ATM, CHEK1 and CHEK2 kinases, and stabilization of TP53/p53 and apoptosis. ATM and CHEK2 may also be activated independently by a parallel pathway mediated by TP53BP1. Required for chromosomal stability during mitosis by promoting recruitment of TOPBP1 to DNA double strand breaks (DSBs): TOPBP1 forms filamentous assemblies that bridge MDC1 and tether broken chromosomes during mitosis. Required for the repair of DSBs via homologous recombination by promoting recruitment of NBN component of the MRN complex to DSBs. This chain is Mediator of DNA damage checkpoint protein 1 (Mdc1), found in Rattus norvegicus (Rat).